Consider the following 158-residue polypeptide: Ethylene-responsive transcription factor ERF120 (158 aa).

Residues Lys86 to Glu147 constitute a DNA-binding region (AP2/ERF). The tract at residues Val134–Asn158 is disordered. Basic and acidic residues predominate over residues Lys144–Asn158.

Belongs to the AP2/ERF transcription factor family. ERF subfamily.

It is found in the nucleus. In terms of biological role, probably acts as a transcriptional activator. Binds to the GCC-box pathogenesis-related promoter element. May be involved in the regulation of gene expression by stress factors and by components of stress signal transduction pathways. This is Ethylene-responsive transcription factor ERF120 (ERF120) from Arabidopsis thaliana (Mouse-ear cress).